We begin with the raw amino-acid sequence, 66 residues long: Large ribosomal subunit protein bL35 (66 aa).

Basic residues predominate over residues 1–28; it reads MPKMKTHRGSAKRFKRTGSGKLKRRHGF. Positions 1 to 50 are disordered; sequence MPKMKTHRGSAKRFKRTGSGKLKRRHGFTSHMFANKSQKQKRKLRKSAMV.

The protein belongs to the bacterial ribosomal protein bL35 family.

The protein is Large ribosomal subunit protein bL35 of Listeria monocytogenes serotype 4a (strain HCC23).